A 328-amino-acid chain; its full sequence is RNA-binding motif protein, X-linked 2 (328 aa).

Lys8 participates in a covalent cross-link: Glycyl lysine isopeptide (Lys-Gly) (interchain with G-Cter in SUMO2). The region spanning 36-114 (AWIFLGGLPY…RTIRVDHVAN (79 aa)) is the RRM domain. The disordered stretch occupies residues 118–328 (PQESEDVDDV…SFHASDRRHY (211 aa)). At Thr140 the chain carries Phosphothreonine. Ser149 bears the Phosphoserine mark. A compositionally biased stretch (basic residues) spans 157-172 (TKKPKKDKKEKKKKKE). 3 stretches are compositionally biased toward basic and acidic residues: residues 192–219 (TVKE…ECRE), 236–247 (GRAEEPEWEAKK), and 255–273 (KPSS…DRGR). Lys246 participates in a covalent cross-link: Glycyl lysine isopeptide (Lys-Gly) (interchain with G-Cter in SUMO2). Phosphoserine is present on Ser274. A compositionally biased stretch (basic residues) spans 291–314 (HRSRSRSRSRSPDRSHRHKKHRYS). Basic and acidic residues predominate over residues 315-328 (HERESFHASDRRHY).

Belongs to the IST3 family. As to quaternary structure, part of the activated spliceosome B/catalytic step 1 spliceosome, one of the forms of the spliceosome which has a well-formed active site but still cannot catalyze the branching reaction and is composed of at least 52 proteins, the U2, U5 and U6 snRNAs and the pre-mRNA. Component of the minor spliceosome, which splices U12-type introns.

The protein resides in the nucleus. Its function is as follows. Involved in pre-mRNA splicing as component of the activated spliceosome. As a component of the minor spliceosome, involved in the splicing of U12-type introns in pre-mRNAs. The polypeptide is RNA-binding motif protein, X-linked 2 (Rbmx2) (Rattus norvegicus (Rat)).